We begin with the raw amino-acid sequence, 403 residues long: L-cysteine:1D-myo-inositol 2-amino-2-deoxy-alpha-D-glucopyranoside ligase (403 aa).

Position 43 (Cys-43) interacts with Zn(2+). Residues 43–46 (CGIT), Thr-58, and 81–83 (NTT) each bind L-cysteinyl-5'-AMP. Positions 45–55 (ITPYDATHLGH) match the 'HIGH' region motif. Residues 183 to 188 (ERGGDP) carry the 'ERGGDP' region motif. Residue Trp-223 coordinates L-cysteinyl-5'-AMP. Cys-227 contacts Zn(2+). L-cysteinyl-5'-AMP is bound at residue 245 to 247 (GSD). Residue His-252 coordinates Zn(2+). Position 279 (Val-279) interacts with L-cysteinyl-5'-AMP. The 'KMSKS' region motif lies at 285-289 (KMSKS).

It belongs to the class-I aminoacyl-tRNA synthetase family. MshC subfamily. Monomer. The cofactor is Zn(2+).

It catalyses the reaction 1D-myo-inositol 2-amino-2-deoxy-alpha-D-glucopyranoside + L-cysteine + ATP = 1D-myo-inositol 2-(L-cysteinylamino)-2-deoxy-alpha-D-glucopyranoside + AMP + diphosphate + H(+). Its function is as follows. Catalyzes the ATP-dependent condensation of GlcN-Ins and L-cysteine to form L-Cys-GlcN-Ins. This Thermobispora bispora (strain ATCC 19993 / DSM 43833 / CBS 139.67 / JCM 10125 / KCTC 9307 / NBRC 14880 / R51) protein is L-cysteine:1D-myo-inositol 2-amino-2-deoxy-alpha-D-glucopyranoside ligase.